We begin with the raw amino-acid sequence, 835 residues long: BCL11 transcription factor A (835 aa).

The segment covering 1–12 (MSRRKQGKPQHL) has biased composition (basic residues). The disordered stretch occupies residues 1-41 (MSRRKQGKPQHLSKREFSPEPLEAILTDDEPDHGPLGAPEG). Positions 1–210 (MSRRKQGKPQ…SEHGSPLTPR (210 aa)) are required for nuclear body formation and for SUMO1 recruitment. Residues 45-71 (LLTCGQCQMNFPLGDILIFIEHKRKQC) form a C2HC-type zinc finger. Cysteine 48, cysteine 51, histidine 66, and cysteine 71 together coordinate Zn(2+). Phosphoserine is present on serine 86. Glycyl lysine isopeptide (Lys-Gly) (interchain with G-Cter in SUMO2) cross-links involve residues lysine 123 and lysine 164. Residues 170 to 193 (YTCTTCKQPFTSAWFLLQHAQNTH) form a C2H2-type 1 zinc finger. Position 205 is a phosphoserine (serine 205). Arginine 271 bears the Asymmetric dimethylarginine mark. The segment at 323–376 (AGNTSSPPLSPGRPSPMQRLLQPFQPGSKPPFLATPPLPPLQSAPPPSQPPVKS) is disordered. A phosphoserine mark is found at serine 332 and serine 337. Residues 355 to 372 (LATPPLPPLQSAPPPSQP) are compositionally biased toward pro residues. 2 C2H2-type zinc fingers span residues 377–399 (KSCEFCGKTFKFQSNLVVHRRSH) and 405–429 (YKCNLCDHACTQASKLKRHMKTHMH). Positions 421-430 (KRHMKTHMHK) are enriched in basic residues. Disordered stretches follow at residues 421-458 (KRHMKTHMHKSSPMTVKSDDGLSTASSPEPGTSDLVGS), 471-512 (KSEN…ERVD), and 572-619 (RGHL…GLSK). Over residues 441-450 (GLSTASSPEP) the composition is skewed to polar residues. Phosphoserine occurs at positions 446 and 447. Positions 482 to 506 (NGDEEEEEDDEEEEEEEEEEEEELT) are enriched in acidic residues. A compositionally biased stretch (basic and acidic residues) spans 574–584 (HLAEAEGHRDT). Serine 608 bears the Phosphoserine mark. Lysine 620 is covalently cross-linked (Glycyl lysine isopeptide (Lys-Gly) (interchain with G-Cter in SUMO2)). Serine 625 and serine 630 each carry phosphoserine. Lysine 634 is covalently cross-linked (Glycyl lysine isopeptide (Lys-Gly) (interchain with G-Cter in SUMO1)). Residues 678–740 (DSRQSPFASS…GRPSSKEGRR (63 aa)) form a disordered region. Residues 682 to 696 (SPFASSSEHSSENGS) are compositionally biased toward low complexity. Threonine 701 is subject to Phosphothreonine. Over residues 706 to 720 (LDGGISGRSGTGSGG) the composition is skewed to gly residues. A DNA-binding region spans residues 737–835 (EGRRSDTCEY…RVLNNDIKTE (99 aa)). The segment at 742–764 (DTCEYCGKVFKNCSNLTVHRRSH) adopts a C2H2-type 4 zinc-finger fold. The Zn(2+) site is built by cysteine 744, cysteine 747, histidine 760, and histidine 764. Residues 765–769 (TGERP) are disordered. Residues 770 to 792 (YKCELCNYACAQSSKLTRHMKTH) form a C2H2-type 5 zinc finger. Residues cysteine 772, cysteine 775, histidine 788, and histidine 792 each coordinate Zn(2+). The interval 793-799 (GQVGKDV) is disordered. The C2H2-type 6 zinc finger occupies 800 to 823 (YKCEICKMPFSVYSTLEKHMKKWH). The Zn(2+) site is built by cysteine 802, cysteine 805, histidine 818, and histidine 823. Lysine 833 participates in a covalent cross-link: Glycyl lysine isopeptide (Lys-Gly) (interchain with G-Cter in SUMO2).

Homotetrameric; self-associates via C2HC-type zinc finger domain. Interacts with MTA2, a component of the nucleosome remodeling and deacetylase (NuRD) repressor complex. Interacts (via its C2H2-type zinc finger domains 4, 5 and 6) with promoter region of gamma-globulin. Interacts with NR2F1, PIAS3, NR2F2 and NR2F6. Isoform 1, isoform 2 and isoform 3 form homodimers and heterodimers. Isoform 2 interacts with TBR1. In terms of processing, sumoylated with SUMO1. As to expression, expressed at high levels in brain, spleen thymus, bone marrow and testis. Expressed in CD34-positive myeloid precursor cells, B-cells, monocytes and megakaryocytes. Expression is tightly regulated during B-cell development. In terms of tissue distribution, expressed in fetal and adult brain, and in the plasmacytoid dendritic cell.

The protein localises to the cytoplasm. The protein resides in the nucleus. It is found in the chromosome. It localises to the nucleus matrix. In terms of biological role, transcription factor. Associated with the BAF SWI/SNF chromatin remodeling complex. Binds to the 5'-TGACCA-3' sequence motif in regulatory regions of target genes, including a distal promoter of the HBG1 hemoglobin subunit gamma-1 gene. Involved in regulation of the developmental switch from gamma- to beta-globin, probably via direct repression of HBG1; hence indirectly repressing fetal hemoglobin (HbF) level. Involved in brain development. May play a role in hematopoiesis. Essential factor in lymphopoiesis required for B-cell formation in fetal liver. May function as a modulator of the transcriptional repression activity of NR2F2. In Homo sapiens (Human), this protein is BCL11 transcription factor A (BCL11A).